Consider the following 617-residue polypeptide: MAGALENATKEIKRLSLEDTHESQYGQIYSVSGPVVVAENMIGCAMYELVKVGHDNLVGEVIRINGDKATIQVYEETAGVTVGDPVLRTGKPLSVELGPGLMETIYDGIQRPLKAIKDESQSIYIPRGIDVPALSRTTQYDFTPGKLKVGDHITGGDIFGSIYENSLLDDHKILLPPRARGTITSIAESGSYNVEDTVLEVEFDGKKHKYSMMHTWPVRVPRPVAEKLSADYPLLTGQRVLDSLFPCVQGGTTCIPGAFGCGKTVISQSLSKFSNSDVIIYVGCGERGNEMAEVLMEFPELYTEISGRKEPIMKRTTLVANTSNMPVAAREASIYTGITLAEYFRDQGKNVSMIADSSSRWAEALREISGRLGEMPADQGFPAYLGAKLASFYERAGKATALGSPDRIGSVSIVAAVSPAGGDFSDPVTTATLGITQVFWGLDKKLAQRKHFPSINTSVSYSKYTNVLNKYYDSNYPEFAQLRDKIREILSNAEELEQVVQLVGKSALSDSDKITLDVATLIKEDFLQQNGYSSYDAFCPIWKTFDMMRAFISYYDEAQKAVANGAQWSKLAESTSDVKHSVSSAKFFEPSRGQKEGEKEFSELLSTISERFAEASE.

Residue 257–264 (GAFGCGKT) coordinates ATP.

Belongs to the ATPase alpha/beta chains family. As to quaternary structure, V-ATPase is a heteromultimeric enzyme composed of a peripheral catalytic V1 complex (components A to H) attached to an integral membrane V0 proton pore complex (components: a, c, c', c'', d, e, f and VOA1). In terms of processing, is a probable target for sumoylation.

The protein localises to the vacuole membrane. It catalyses the reaction ATP + H2O + 4 H(+)(in) = ADP + phosphate + 5 H(+)(out). In terms of biological role, catalytic subunit of the V1 complex of vacuolar(H+)-ATPase (V-ATPase), a multisubunit enzyme composed of a peripheral complex (V1) that hydrolyzes ATP and a membrane integral complex (V0) that translocates protons. V-ATPase is responsible for acidifying and maintaining the pH of intracellular compartments. Mediates oxidative stress response, filamentous growth, and plays an important role in virulence. The protein is V-type proton ATPase catalytic subunit A of Candida albicans (strain SC5314 / ATCC MYA-2876) (Yeast).